Here is a 342-residue protein sequence, read N- to C-terminus: Methionyl-tRNA formyltransferase (342 aa).

108 to 111 (SLLP) provides a ligand contact to (6S)-5,6,7,8-tetrahydrofolate.

It belongs to the Fmt family.

The catalysed reaction is L-methionyl-tRNA(fMet) + (6R)-10-formyltetrahydrofolate = N-formyl-L-methionyl-tRNA(fMet) + (6S)-5,6,7,8-tetrahydrofolate + H(+). In terms of biological role, attaches a formyl group to the free amino group of methionyl-tRNA(fMet). The formyl group appears to play a dual role in the initiator identity of N-formylmethionyl-tRNA by promoting its recognition by IF2 and preventing the misappropriation of this tRNA by the elongation apparatus. The chain is Methionyl-tRNA formyltransferase from Prochlorococcus marinus (strain MIT 9303).